A 1324-amino-acid chain; its full sequence is Ubiquitin carboxyl-terminal hydrolase 42 (1324 aa).

Disordered regions lie at residues 1-38 (MTIV…SASW) and 63-87 (YSSS…DGIA). Positions 10-25 (SSDPSAYQNQPGSSEA) are enriched in polar residues. The span at 63–80 (YSSSSVPDKSKPSPQKDQ) shows a compositional bias: low complexity. Ser-75 carries the post-translational modification Phosphoserine. One can recognise a USP domain in the interval 111–412 (AGLQNLGNTC…QAYVLFYIRS (302 aa)). The active-site Nucleophile is the Cys-120. The active-site Proton acceptor is His-371. Disordered regions lie at residues 452 to 494 (IGPQ…NRAS), 536 to 707 (QSQP…MPAP), 722 to 1026 (LSNK…RHRS), 1085 to 1131 (RAGL…HPDR), 1149 to 1254 (DRFH…VKDS), and 1275 to 1294 (GGFP…FREK). Residues 477–489 (PSSSMSSPNGNSS) show a composition bias toward low complexity. Position 483 is a phosphoserine (Ser-483). Over residues 536-564 (QSQPNLHSNSLENPTKPVPSSTITNSAVQ) the composition is skewed to polar residues. Residues 565–576 (STSNASTMSVSS) are compositionally biased toward low complexity. Polar residues predominate over residues 586–603 (ESCSQPVMNGKSKLNSSV). Ser-754 and Ser-856 each carry phosphoserine. Basic and acidic residues-rich tracts occupy residues 938–974 (AKEK…SKTE), 984–1013 (CPRE…ERRS), 1101–1113 (RGCE…ERHR), 1149–1158 (DRFHEHENGK), and 1165–1191 (DSVE…EEPK). Position 1181 is a phosphoserine (Ser-1181). Over residues 1192 to 1206 (AKKHKKSKKKKKSKD) the composition is skewed to basic residues. Over residues 1207-1218 (KHRDRDSRHQQD) the composition is skewed to basic and acidic residues. Ser-1219, Ser-1222, and Ser-1226 each carry phosphoserine. Over residues 1231–1245 (HRHKKKKKKKKRHSR) the composition is skewed to basic residues. A Phosphoserine modification is found at Ser-1247.

It belongs to the peptidase C19 family. As to expression, broadly expressed.

It carries out the reaction Thiol-dependent hydrolysis of ester, thioester, amide, peptide and isopeptide bonds formed by the C-terminal Gly of ubiquitin (a 76-residue protein attached to proteins as an intracellular targeting signal).. In terms of biological role, deubiquitinating enzyme which may play an important role during spermatogenesis. The chain is Ubiquitin carboxyl-terminal hydrolase 42 (USP42) from Homo sapiens (Human).